Here is a 145-residue protein sequence, read N- to C-terminus: Basic phospholipase A2 Vb-2 (145 aa).

Residues 1 to 19 form the signal peptide; the sequence is MNPAHLLVLLAVCVSLLGA. The propeptide occupies 20 to 27; it reads ANIPPQPL. Cystine bridges form between Cys38-Cys97, Cys52-Cys144, Cys54-Cys70, Cys69-Cys125, Cys76-Cys118, Cys86-Cys111, and Cys104-Cys116. Residues Tyr53, Gly55, and Gly57 each coordinate Ca(2+). His73 is an active-site residue. Residue Asp74 coordinates Ca(2+). The active site involves Asp119.

Ca(2+) serves as cofactor. In terms of tissue distribution, expressed by the venom gland.

It localises to the secreted. The catalysed reaction is a 1,2-diacyl-sn-glycero-3-phosphocholine + H2O = a 1-acyl-sn-glycero-3-phosphocholine + a fatty acid + H(+). Its function is as follows. Snake venom phospholipase A2 (PLA2) that has only a weak enzymatic activity. Inhibits neuromuscular transmission by blocking acetylcholine release from the nerve termini. PLA2 catalyzes the calcium-dependent hydrolysis of the 2-acyl groups in 3-sn-phosphoglycerides. In Bungarus fasciatus (Banded krait), this protein is Basic phospholipase A2 Vb-2.